Consider the following 616-residue polypeptide: Dihydroxy-acid dehydratase (616 aa).

Asp81 contacts Mg(2+). Residue Cys122 coordinates [2Fe-2S] cluster. Asp123 and Lys124 together coordinate Mg(2+). Lys124 is modified (N6-carboxylysine). Cys195 contributes to the [2Fe-2S] cluster binding site. Glu491 is a binding site for Mg(2+). Ser517 (proton acceptor) is an active-site residue.

This sequence belongs to the IlvD/Edd family. Homodimer. [2Fe-2S] cluster is required as a cofactor. It depends on Mg(2+) as a cofactor.

The catalysed reaction is (2R)-2,3-dihydroxy-3-methylbutanoate = 3-methyl-2-oxobutanoate + H2O. The enzyme catalyses (2R,3R)-2,3-dihydroxy-3-methylpentanoate = (S)-3-methyl-2-oxopentanoate + H2O. The protein operates within amino-acid biosynthesis; L-isoleucine biosynthesis; L-isoleucine from 2-oxobutanoate: step 3/4. It functions in the pathway amino-acid biosynthesis; L-valine biosynthesis; L-valine from pyruvate: step 3/4. Functionally, functions in the biosynthesis of branched-chain amino acids. Catalyzes the dehydration of (2R,3R)-2,3-dihydroxy-3-methylpentanoate (2,3-dihydroxy-3-methylvalerate) into 2-oxo-3-methylpentanoate (2-oxo-3-methylvalerate) and of (2R)-2,3-dihydroxy-3-methylbutanoate (2,3-dihydroxyisovalerate) into 2-oxo-3-methylbutanoate (2-oxoisovalerate), the penultimate precursor to L-isoleucine and L-valine, respectively. In Salmonella paratyphi A (strain ATCC 9150 / SARB42), this protein is Dihydroxy-acid dehydratase.